We begin with the raw amino-acid sequence, 62 residues long: Beta-defensin 33 (62 aa).

A signal peptide spans 1 to 20 (MRLLFLLFLLLVCLAQKTSG). Cystine bridges form between C30–C59, C37–C52, and C45–C60.

Belongs to the beta-defensin family.

The protein resides in the secreted. Has antibacterial activity. The protein is Beta-defensin 33 (Defb33) of Rattus norvegicus (Rat).